Reading from the N-terminus, the 443-residue chain is Sulfoquinovose isomerase (443 aa).

It belongs to the SqvD family.

The enzyme catalyses 6-sulfo-beta-D-quinovose = 6-deoxy-6-sulfo-D-fructose. Its function is as follows. Part of the sulfo-EMP2 pathway, a D-sulfoquinovose degradation pathway that produces sulfolactate (SL). Catalyzes the isomerization of sulfoquinovose (SQ) to 6-deoxy-6-sulfo-D-fructose (SF). The protein is Sulfoquinovose isomerase of Alkalicoccus urumqiensis (Bacillus urumqiensis).